The following is a 132-amino-acid chain: Small ribosomal subunit protein uS8 (132 aa).

Belongs to the universal ribosomal protein uS8 family. As to quaternary structure, part of the 30S ribosomal subunit. Contacts proteins S5 and S12.

Its function is as follows. One of the primary rRNA binding proteins, it binds directly to 16S rRNA central domain where it helps coordinate assembly of the platform of the 30S subunit. In Rhodopseudomonas palustris (strain HaA2), this protein is Small ribosomal subunit protein uS8.